The following is a 217-amino-acid chain: High frequency lysogenization protein HflD homolog (217 aa).

Belongs to the HflD family.

The protein resides in the cytoplasm. Its subcellular location is the cell membrane. In Buchnera aphidicola subsp. Baizongia pistaciae (strain Bp), this protein is High frequency lysogenization protein HflD homolog.